Reading from the N-terminus, the 246-residue chain is uncharacterized protein (246 aa).

This sequence belongs to the IIV-6 170L family.

This is an uncharacterized protein from Acheta domesticus (House cricket).